The sequence spans 140 residues: Protein ApaG (140 aa).

Residues 13-137 (EARTRDIVVR…FSLHLPGAAM (125 aa)) form the ApaG domain.

The protein is Protein ApaG of Caulobacter vibrioides (strain ATCC 19089 / CIP 103742 / CB 15) (Caulobacter crescentus).